The sequence spans 160 residues: MKTLNVLALVLVLLCINASTEWPTHTVCKEENLEIYYKSCDPQQDFAFSIDRCSDVTTHTFDIRAAMVLRQSIKELYAKVDLIINGKTVLSYSETLCGPGLSKLIFCGKKKGEHLYYEGPITLGIKEIPQRDYTITARLTNEDRATVACADFTVKNYLDY.

A signal peptide spans 1 to 20 (MKTLNVLALVLVLLCINAST). Disulfide bonds link Cys-28–Cys-53, Cys-40–Cys-149, and Cys-97–Cys-107.

In terms of assembly, M-shaped tetramer of two CD180-LY86 heterodimers. In terms of tissue distribution, detected in the macrophage-like 10.4 cells.

It localises to the secreted. Its subcellular location is the extracellular space. In terms of biological role, may cooperate with CD180 and TLR4 to mediate the innate immune response to bacterial lipopolysaccharide (LPS) and cytokine production. Important for efficient CD180 cell surface expression. This Gallus gallus (Chicken) protein is Lymphocyte antigen 86 (LY86).